A 315-amino-acid polypeptide reads, in one-letter code: Transaldolase (315 aa).

K131 serves as the catalytic Schiff-base intermediate with substrate.

This sequence belongs to the transaldolase family. Type 1 subfamily. In terms of assembly, homodimer.

The protein localises to the cytoplasm. It catalyses the reaction D-sedoheptulose 7-phosphate + D-glyceraldehyde 3-phosphate = D-erythrose 4-phosphate + beta-D-fructose 6-phosphate. It participates in carbohydrate degradation; pentose phosphate pathway; D-glyceraldehyde 3-phosphate and beta-D-fructose 6-phosphate from D-ribose 5-phosphate and D-xylulose 5-phosphate (non-oxidative stage): step 2/3. Transaldolase is important for the balance of metabolites in the pentose-phosphate pathway. The polypeptide is Transaldolase (Actinobacillus pleuropneumoniae serotype 7 (strain AP76)).